The chain runs to 292 residues: Ferric aerobactin-binding protein VatD (292 aa).

The first 12 residues, 1-12 (MLSAALAFNSYA), serve as a signal peptide directing secretion. The 263-residue stretch at 30-292 (KVVALDWVLT…HITGRLTQPQ (263 aa)) folds into the Fe/B12 periplasmic-binding domain. W61, R77, Y118, R185, W213, F215, W269, and F271 together coordinate desferrioxamine B.

The protein belongs to the bacterial solute-binding protein 8 family. In terms of assembly, the complex is composed of two ATP-binding proteins (VatC), two transmembrane proteins (VatB) and a solute-binding protein (VatD).

It is found in the periplasm. In terms of biological role, part of the ABC transporter complex VatCDB involved in the import of iron(3+)-complexed aerobactin, a citrate-hydroxamate siderophore produced by other bacteria. Binds the iron(3+)-aerobactin complex and transfers it to the membrane-bound permease. Functions in the import of iron(3+)-complexed vulnibactin, a catecholate siderophore synthesized by V.vulnificus, in the absence of FatB. The polypeptide is Ferric aerobactin-binding protein VatD (Vibrio vulnificus).